The primary structure comprises 226 residues: N-acetylmuramic acid 6-phosphate phosphatase (226 aa).

Asp-12 serves as the catalytic Nucleophile. Residues Asp-12, Asp-14, and Asp-171 each contribute to the Mg(2+) site. The active-site Proton donor is Asp-14.

It belongs to the HAD-like hydrolase superfamily. CbbY/CbbZ/Gph/YieH family. Phosphatase MupP subfamily. Mg(2+) is required as a cofactor.

The catalysed reaction is N-acetyl-D-muramate 6-phosphate + H2O = N-acetyl-D-muramate + phosphate. The protein operates within cell wall biogenesis; peptidoglycan recycling. In terms of biological role, specifically catalyzes the dephosphorylation of N-acetylmuramate 6-phosphate (MurNAc-6P) to MurNac. Is involved in peptidoglycan recycling as part of a cell wall recycling pathway that bypasses de novo biosynthesis of the peptidoglycan precursor UDP-MurNAc. Plays a role in intrinsic resistance to fosfomycin, which targets the de novo synthesis of UDP-MurNAc. This chain is N-acetylmuramic acid 6-phosphate phosphatase, found in Pseudomonas aeruginosa (strain ATCC 15692 / DSM 22644 / CIP 104116 / JCM 14847 / LMG 12228 / 1C / PRS 101 / PAO1).